A 199-amino-acid chain; its full sequence is Peroxynitrite isomerase (199 aa).

A GXWXGXG motif is present at residues 21-27; it reads GEWEGRG. Residue His190 participates in heme b binding.

This sequence belongs to the nitrobindin family. As to quaternary structure, homodimer. It depends on heme b as a cofactor.

The catalysed reaction is peroxynitrite = nitrate. It functions in the pathway nitrogen metabolism. Heme-binding protein able to scavenge peroxynitrite and to protect free L-tyrosine against peroxynitrite-mediated nitration, by acting as a peroxynitrite isomerase that converts peroxynitrite to nitrate. Therefore, this protein likely plays a role in peroxynitrite sensing and in the detoxification of reactive nitrogen and oxygen species (RNS and ROS, respectively). Is able to bind nitric oxide (NO) in vitro, but may act as a sensor of peroxynitrite levels in vivo. The protein is Peroxynitrite isomerase of Paenarthrobacter aurescens (strain TC1).